A 433-amino-acid chain; its full sequence is Succinate--CoA ligase [GDP-forming] subunit beta, mitochondrial (433 aa).

Residues 1–38 (MASPVAIAAQAGKLLRERALRPLLAVRSQAGHLTPRRW) constitute a mitochondrion transit peptide. One can recognise an ATP-grasp domain in the interval 47–275 (KKLMSEHGVR…NAEFRQKDIF (229 aa)). Position 58 (glutamine 58) interacts with GTP. Residue lysine 67 is modified to N6-acetyllysine; alternate. Lysine 67 is modified (N6-succinyllysine; alternate). Lysine 74 carries the N6-acetyllysine modification. An N6-succinyllysine modification is found at lysine 79. 91–93 (GRG) is a GTP binding site. Residues lysine 112, lysine 133, and lysine 140 each carry the N6-acetyllysine modification. Leucine 147 is a GTP binding site. Serine 162 carries the post-translational modification Phosphoserine. Residue lysine 201 is modified to N6-acetyllysine. A Phosphoserine modification is found at serine 217. 2 positions are modified to N6-acetyllysine: lysine 219 and lysine 228. Mg(2+) is bound by residues asparagine 244 and aspartate 258. An N6-acetyllysine modification is found at lysine 272. Residue asparagine 309 coordinates substrate. Lysine 339 carries the N6-succinyllysine modification. Lysine 348 carries the post-translational modification N6-acetyllysine. Residue 366–368 (GIV) coordinates substrate. Lysine 387, lysine 407, and lysine 424 each carry N6-acetyllysine.

Belongs to the succinate/malate CoA ligase beta subunit family. GTP-specific subunit beta subfamily. As to quaternary structure, heterodimer of an alpha and a beta subunit. The beta subunit determines specificity for GTP. The cofactor is Mg(2+).

Its subcellular location is the mitochondrion. It catalyses the reaction GTP + succinate + CoA = succinyl-CoA + GDP + phosphate. It functions in the pathway carbohydrate metabolism; tricarboxylic acid cycle; succinate from succinyl-CoA (ligase route): step 1/1. Functionally, GTP-specific succinyl-CoA synthetase functions in the citric acid cycle (TCA), coupling the hydrolysis of succinyl-CoA to the synthesis of GTP and thus represents the only step of substrate-level phosphorylation in the TCA. The beta subunit provides nucleotide specificity of the enzyme and binds the substrate succinate, while the binding sites for coenzyme A and phosphate are found in the alpha subunit. This is Succinate--CoA ligase [GDP-forming] subunit beta, mitochondrial from Mus musculus (Mouse).